Consider the following 342-residue polypeptide: Ribosomal RNA small subunit methyltransferase C (342 aa).

The protein belongs to the methyltransferase superfamily. RsmC family. In terms of assembly, monomer.

The protein resides in the cytoplasm. The catalysed reaction is guanosine(1207) in 16S rRNA + S-adenosyl-L-methionine = N(2)-methylguanosine(1207) in 16S rRNA + S-adenosyl-L-homocysteine + H(+). Its function is as follows. Specifically methylates the guanine in position 1207 of 16S rRNA in the 30S particle. This Shewanella loihica (strain ATCC BAA-1088 / PV-4) protein is Ribosomal RNA small subunit methyltransferase C.